A 332-amino-acid polypeptide reads, in one-letter code: Adenosine deaminase (332 aa).

Residues His-12 and His-14 each contribute to the Zn(2+) site. Residues His-14, Asp-16, and Gly-170 each contribute to the substrate site. His-197 lines the Zn(2+) pocket. The Proton donor role is filled by Glu-200. Asp-278 contacts Zn(2+). Position 279 (Asp-279) interacts with substrate.

It belongs to the metallo-dependent hydrolases superfamily. Adenosine and AMP deaminases family. Adenosine deaminase subfamily. Zn(2+) is required as a cofactor.

The enzyme catalyses adenosine + H2O + H(+) = inosine + NH4(+). It catalyses the reaction 2'-deoxyadenosine + H2O + H(+) = 2'-deoxyinosine + NH4(+). Catalyzes the hydrolytic deamination of adenosine and 2-deoxyadenosine. The sequence is that of Adenosine deaminase from Serratia proteamaculans (strain 568).